Consider the following 217-residue polypeptide: Ribonuclease HII (217 aa).

The region spanning 27–216 (SQVAGVDEAG…VKESIQEGVC (190 aa)) is the RNase H type-2 domain. Asp-33, Glu-34, and Asp-126 together coordinate a divalent metal cation.

The protein belongs to the RNase HII family. The cofactor is Mn(2+). Mg(2+) serves as cofactor.

It localises to the cytoplasm. It catalyses the reaction Endonucleolytic cleavage to 5'-phosphomonoester.. Its function is as follows. Endonuclease that specifically degrades the RNA of RNA-DNA hybrids. This Chlamydia trachomatis serovar D (strain ATCC VR-885 / DSM 19411 / UW-3/Cx) protein is Ribonuclease HII (rnhB).